A 220-amino-acid chain; its full sequence is Claudin-24 (220 aa).

Residues 1–10 (MALIFRTAMQ) are Cytoplasmic-facing. A helical transmembrane segment spans residues 11–31 (SVGLLLSLLGWILSIITTYLP). Residues 32–81 (HWKNLNLDLNEMENWTMGLWQTCVIQEEVGMQCKDFDSFLALPAELRVSR) are Extracellular-facing. The chain crosses the membrane as a helical span at residues 82–102 (ILMFLSNGLGFLGLLVSGFGL). Topologically, residues 103–117 (DCLRIGESQRDLKRR) are cytoplasmic. Residues 118–138 (LLILGGILSWASGITALVPVS) traverse the membrane as a helical segment. Over 139–161 (WVAHKTVQEFWDENVPDFVPRWE) the chain is Extracellular. The chain crosses the membrane as a helical span at residues 162–182 (FGEALFLGWFAGLSLLLGGCL). Residues 183–220 (LNCAACSSHAPLALGHYAVAQMQTQCPYLEDGTADPQV) are Cytoplasmic-facing.

The protein belongs to the claudin family.

The protein localises to the cell junction. It is found in the tight junction. Its subcellular location is the cell membrane. In terms of biological role, plays a major role in tight junction-specific obliteration of the intercellular space, through calcium-independent cell-adhesion activity. This Homo sapiens (Human) protein is Claudin-24.